Here is a 753-residue protein sequence, read N- to C-terminus: Polyribonucleotide nucleotidyltransferase (753 aa).

Residues aspartate 488 and aspartate 494 each contribute to the Mg(2+) site. Residues 555–614 (PRLLRTKISPDKIGALIGPGGKNIRGIQETTGAVIEVDDEGTVLVASSNKESAQEAMRQV) form the KH domain. One can recognise an S1 motif domain in the interval 624–692 (GKIYDGTVSS…EHDRVKLSRR (69 aa)). The segment covering 698-719 (LGEEDPLAVEGEGGGDSEGGGD) has biased composition (acidic residues). Residues 698–753 (LGEEDPLAVEGEGGGDSEGGGDGEDRPRRRRGGSGGGGGGGRGRGPRRSGGGRDRD) form a disordered region. Residues 730–740 (GSGGGGGGGRG) show a composition bias toward gly residues.

The protein belongs to the polyribonucleotide nucleotidyltransferase family. Requires Mg(2+) as cofactor.

The protein localises to the cytoplasm. The catalysed reaction is RNA(n+1) + phosphate = RNA(n) + a ribonucleoside 5'-diphosphate. Functionally, involved in mRNA degradation. Catalyzes the phosphorolysis of single-stranded polyribonucleotides processively in the 3'- to 5'-direction. This Rhodopirellula baltica (strain DSM 10527 / NCIMB 13988 / SH1) protein is Polyribonucleotide nucleotidyltransferase.